Here is a 331-residue protein sequence, read N- to C-terminus: Low affinity immunoglobulin epsilon Fc receptor (331 aa).

Topologically, residues 1–23 (MEENEYSGYWEPPRKRCCCARRG) are cytoplasmic. 2 S-palmitoyl cysteine lipidation sites follow: Cys-17 and Cys-18. A helical; Signal-anchor for type II membrane protein transmembrane segment spans residues 24–49 (TQLMLVGLLSTAMWAGLLALLLLWHW). Topologically, residues 50-331 (ETEKNLKQLG…PTRPTPKSEP (282 aa)) are extracellular. An N-linked (GlcNAc...) asparagine glycan is attached at Asn-65. Repeats lie at residues 71-91 (KDLQKFQSNQLAQKSQVVQMS), 92-112 (QNLQELQAEQKQMKAQDSRLS), and 113-133 (QNLTGLQEDLRNAQSQNSKLS). N-linked (GlcNAc...) asparagine glycosylation is present at Asn-114. 4 cysteine pairs are disulfide-bonded: Cys-183-Cys-311, Cys-186-Cys-197, Cys-214-Cys-305, and Cys-282-Cys-296. A C-type lectin domain is found at 185-298 (ICPKNWLHFQ…GQWNDAFCRS (114 aa)). 3 residues coordinate Ca(2+): Glu-272, Asn-292, and Asp-293. Ser-319 carries an O-linked (Xyl...) (chondroitin sulfate) serine glycan.

Homotrimer. Interacts (via C-type lectin domain) with IGHE (via CH3 region); this interaction regulates IgE homeostasis. Interacts (via C-terminus) with CR2/CD21 (via Sushi domain 1 and 2). N- and O-glycosylated.

It is found in the cell membrane. The protein localises to the secreted. In terms of biological role, low-affinity receptor for immunoglobulin E (IgE) and CR2/CD21. Has essential roles in the regulation of IgE production and in the differentiation of B cells. On B cells, initiates IgE-dependent antigen uptake and presentation to T cells. On macrophages, upon IgE binding and antigen cross-linking induces intracellular killing of parasites through activation of L-Arginine-nitric oxide pathway. This is Low affinity immunoglobulin epsilon Fc receptor (Fcer2) from Mus musculus (Mouse).